Consider the following 187-residue polypeptide: Elongation factor P (187 aa).

It belongs to the elongation factor P family.

It is found in the cytoplasm. It participates in protein biosynthesis; polypeptide chain elongation. Its function is as follows. Involved in peptide bond synthesis. Stimulates efficient translation and peptide-bond synthesis on native or reconstituted 70S ribosomes in vitro. Probably functions indirectly by altering the affinity of the ribosome for aminoacyl-tRNA, thus increasing their reactivity as acceptors for peptidyl transferase. This is Elongation factor P from Zymomonas mobilis subsp. mobilis (strain ATCC 31821 / ZM4 / CP4).